The chain runs to 411 residues: Argininosuccinate synthase (411 aa).

ATP-binding positions include 13 to 21 (AYSGGLDTS) and Ala-40. Residues Tyr-91 and Ser-96 each coordinate L-citrulline. Position 121 (Gly-121) interacts with ATP. Thr-123, Asn-127, and Asp-128 together coordinate L-aspartate. Asn-127 lines the L-citrulline pocket. Residues Arg-131, Ser-182, Ser-191, Glu-267, and Tyr-279 each coordinate L-citrulline.

It belongs to the argininosuccinate synthase family. Type 1 subfamily. As to quaternary structure, homotetramer.

It is found in the cytoplasm. The catalysed reaction is L-citrulline + L-aspartate + ATP = 2-(N(omega)-L-arginino)succinate + AMP + diphosphate + H(+). The protein operates within amino-acid biosynthesis; L-arginine biosynthesis; L-arginine from L-ornithine and carbamoyl phosphate: step 2/3. The chain is Argininosuccinate synthase from Bartonella tribocorum (strain CIP 105476 / IBS 506).